We begin with the raw amino-acid sequence, 353 residues long: tRNA N6-adenosine threonylcarbamoyltransferase (353 aa).

2 residues coordinate Fe cation: His109 and His113. Substrate is bound by residues 136 to 140, Asp169, Gly182, Asp186, and Asn284; that span reads TVSGG. Asp312 contacts Fe cation.

Belongs to the KAE1 / TsaD family. Requires Fe(2+) as cofactor.

Its subcellular location is the cytoplasm. It carries out the reaction L-threonylcarbamoyladenylate + adenosine(37) in tRNA = N(6)-L-threonylcarbamoyladenosine(37) in tRNA + AMP + H(+). Functionally, required for the formation of a threonylcarbamoyl group on adenosine at position 37 (t(6)A37) in tRNAs that read codons beginning with adenine. Is involved in the transfer of the threonylcarbamoyl moiety of threonylcarbamoyl-AMP (TC-AMP) to the N6 group of A37, together with TsaE and TsaB. TsaD likely plays a direct catalytic role in this reaction. The protein is tRNA N6-adenosine threonylcarbamoyltransferase of Chlorobium limicola (strain DSM 245 / NBRC 103803 / 6330).